The chain runs to 170 residues: Cytochrome c-type biogenesis protein CcmE (170 aa).

Topologically, residues 1–7 (MTRKQRR) are cytoplasmic. The chain crosses the membrane as a helical; Signal-anchor for type II membrane protein span at residues 8-28 (LTIIGGALFVLAVAAGLVLNA). At 29 to 170 (LRDSIVFFST…GEKTAAGATQ (142 aa)) the chain is on the periplasmic side. Positions 122 and 126 each coordinate heme. Residues 137 to 146 (KQGHWKDDYG) show a composition bias toward basic and acidic residues. Residues 137-170 (KQGHWKDDYGKPQAAKPGPVSMREGEKTAAGATQ) are disordered.

This sequence belongs to the CcmE/CycJ family.

Its subcellular location is the cell inner membrane. In terms of biological role, heme chaperone required for the biogenesis of c-type cytochromes. Transiently binds heme delivered by CcmC and transfers the heme to apo-cytochromes in a process facilitated by CcmF and CcmH. This Bradyrhizobium sp. (strain BTAi1 / ATCC BAA-1182) protein is Cytochrome c-type biogenesis protein CcmE.